Here is a 308-residue protein sequence, read N- to C-terminus: Very-long-chain enoyl-CoA reductase (308 aa).

Topologically, residues Met1–Ser86 are cytoplasmic. Residue Lys22 is modified to N6-acetyllysine. Phosphoserine is present on Ser58. Lys60 carries the post-translational modification N6-acetyllysine. The helical transmembrane segment at Trp87 to Tyr106 threads the bilayer. The Lumenal portion of the chain corresponds to Phe107–His124. A helical membrane pass occupies residues Thr125–Phe147. Over Val148–Leu158 the chain is Cytoplasmic. A helical membrane pass occupies residues Arg159–Asn180. Residues His181–Tyr189 lie on the Lumenal side of the membrane. A helical transmembrane segment spans residues Gly190–Arg216. The Cytoplasmic segment spans residues Asp217–Cys245. A helical transmembrane segment spans residues Pro246–Thr262. Topologically, residues Gln263–Cys264 are lumenal. The helical transmembrane segment at Leu265–Glu292 threads the bilayer. The Cytoplasmic segment spans residues Phe293 to Leu308.

This sequence belongs to the steroid 5-alpha reductase family. Interacts with ELOVL1 and LASS2. In terms of processing, glycosylated.

The protein resides in the endoplasmic reticulum membrane. It catalyses the reaction a very-long-chain 2,3-saturated fatty acyl-CoA + NADP(+) = a very-long-chain (2E)-enoyl-CoA + NADPH + H(+). The enzyme catalyses octadecanoyl-CoA + NADP(+) = (2E)-octadecenoyl-CoA + NADPH + H(+). The catalysed reaction is (2E,7Z,10Z,13Z,16Z)-docosapentaenoyl-CoA + NADPH + H(+) = (7Z,10Z,13Z,16Z)-docosatetraenoyl-CoA + NADP(+). It carries out the reaction (2E,7Z,10Z,13Z,16Z,19Z)-docosahexaenoyl-CoA + NADPH + H(+) = (7Z,10Z,13Z,16Z,19Z)-docosapentaenoyl-CoA + NADP(+). It catalyses the reaction (2E,8Z,11Z,14Z)-eicosatetraenoyl-CoA + NADPH + H(+) = (8Z,11Z,14Z)-eicosatrienoyl-CoA + NADP(+). The enzyme catalyses (2E)-hexadecenoyl-CoA + NADPH + H(+) = hexadecanoyl-CoA + NADP(+). It participates in lipid metabolism; fatty acid biosynthesis. The protein operates within lipid metabolism; sphingolipid metabolism. Its function is as follows. Involved in both the production of very long-chain fatty acids for sphingolipid synthesis and the degradation of the sphingosine moiety in sphingolipids through the sphingosine 1-phosphate metabolic pathway. Catalyzes the last of the four reactions of the long-chain fatty acids elongation cycle. This endoplasmic reticulum-bound enzymatic process, allows the addition of 2 carbons to the chain of long- and very long-chain fatty acids/VLCFAs per cycle. This enzyme reduces the trans-2,3-enoyl-CoA fatty acid intermediate to an acyl-CoA that can be further elongated by entering a new cycle of elongation. Thereby, it participates in the production of VLCFAs of different chain lengths that are involved in multiple biological processes as precursors of membrane lipids and lipid mediators. Catalyzes the saturation step of the sphingosine 1-phosphate metabolic pathway, the conversion of trans-2-hexadecenoyl-CoA to palmitoyl-CoA. This chain is Very-long-chain enoyl-CoA reductase (TECR), found in Bos taurus (Bovine).